Reading from the N-terminus, the 556-residue chain is Formate--tetrahydrofolate ligase (556 aa).

Position 65-72 (65-72) interacts with ATP; that stretch reads TPAGEGKS.

The protein belongs to the formate--tetrahydrofolate ligase family.

It catalyses the reaction (6S)-5,6,7,8-tetrahydrofolate + formate + ATP = (6R)-10-formyltetrahydrofolate + ADP + phosphate. It participates in one-carbon metabolism; tetrahydrofolate interconversion. The sequence is that of Formate--tetrahydrofolate ligase from Streptococcus thermophilus (strain ATCC BAA-250 / LMG 18311).